We begin with the raw amino-acid sequence, 563 residues long: Calmodulin-binding protein 60 G (563 aa).

Positions 1–76 (MKIRNSPSFH…SSCVSMERSR (76 aa)) are calmodulin-binding. Residues 147 to 263 (ESWTVEGFNR…VSATRLAERK (117 aa)) are DNA-binding.

The protein belongs to the plant ACBP60 protein family. In terms of assembly, interacts with calmodulin (CaM) in the presence of calcium ions; this interaction is required for defense responses. (Microbial infection) Interacts with V.dahliae SCP41; the interaction is direct and inhibits CBP60G. Expressed in seedlings, roots, leaves, inflorescences and flowers, and, to a lower extent, in siliques. Particularly present in guard cells.

Its subcellular location is the nucleus. In terms of biological role, transcription activator that binds DNA in a sequence-specific manner, 5'-GAAATTTTGG-3', to promote the expression of target genes. Recruited to the promoter of ICS1 and other defense-related genes (e.g. PR1, PR2 and EDS5) in response to both biotic (e.g. Pseudomonas syringae pv. maculicola ES4326, P.syringae pv. tomato DC3000, and microbe-associated molecular patterns (MAMPs) such as flg22) and abiotic stresses (e.g. UV-B, drought and abscisic acid), thus triggering rapid defense responses by stimulating salicylic acid (SA) biosynthesis. Involved in basal and systemic acquired resistance to P.syringae and Hyaloperonospora arabidopsidis. Mediates resistance to drought and sensitivity to abscisic acid (ABA), especially for ABA-mediated signaling process that regulates early seedling growth. The protein is Calmodulin-binding protein 60 G of Arabidopsis thaliana (Mouse-ear cress).